Reading from the N-terminus, the 190-residue chain is GTP cyclohydrolase 1 1 (190 aa).

This sequence belongs to the GTP cyclohydrolase I family. As to quaternary structure, homomer.

The enzyme catalyses GTP + H2O = 7,8-dihydroneopterin 3'-triphosphate + formate + H(+). It participates in cofactor biosynthesis; 7,8-dihydroneopterin triphosphate biosynthesis; 7,8-dihydroneopterin triphosphate from GTP: step 1/1. The protein is GTP cyclohydrolase 1 1 of Pseudomonas putida (strain ATCC 47054 / DSM 6125 / CFBP 8728 / NCIMB 11950 / KT2440).